We begin with the raw amino-acid sequence, 117 residues long: Large ribosomal subunit protein bL20c (117 aa).

Belongs to the bacterial ribosomal protein bL20 family.

Its subcellular location is the plastid. It localises to the chloroplast. Its function is as follows. Binds directly to 23S ribosomal RNA and is necessary for the in vitro assembly process of the 50S ribosomal subunit. It is not involved in the protein synthesizing functions of that subunit. This Nasturtium officinale (Watercress) protein is Large ribosomal subunit protein bL20c.